The sequence spans 1165 residues: Symplekin (1165 aa).

5 HEAT repeats span residues 23-58 (TATA…TVLG), 61-95 (AELA…QVCK), 98-140 (VELL…YLCS), 147-186 (SAEQ…GVVV), and 218-257 (KLQE…IAKM). Residues 365–384 (DQQQREMELDTEELERQKQK) form a disordered region. Residues 367-384 (QQREMELDTEELERQKQK) are compositionally biased toward basic and acidic residues.

This sequence belongs to the Symplekin family. As to quaternary structure, interacts with Cpsf73 and Cpsf100 forming a core cleavage factor required for both polyadenylated and histone mRNA processing. Interacts with Slbp and Lsm11.

It is found in the nucleus. In terms of biological role, component of a protein complex required for cotranscriptional processing of 3'-ends of polyadenylated and histone pre-mRNA. Involved in germline stem cell transit amplification, differentiation and mitosis-to-meiosis transition. The protein is Symplekin of Drosophila melanogaster (Fruit fly).